Reading from the N-terminus, the 491-residue chain is Spermatogenesis-defective protein 39 homolog (491 aa).

Thr21 is subject to Phosphothreonine. The span at 72–81 (KETAGSSGST) shows a compositional bias: polar residues. Positions 72–101 (KETAGSSGSTPEGREQLKGRNSFYTQLPKP) are disordered. Thr115 carries the post-translational modification Phosphothreonine. A phosphoserine mark is found at Ser119, Ser122, and Ser128. Residues 121 to 141 (QSLSDALSDTPAKSYAPELGR) are disordered. Residue Thr130 is modified to Phosphothreonine.

It belongs to the SPE39 family. In terms of assembly, interacts with VPS33B. Associates with the homotypic fusion and vacuole protein sorting (HOPS) complex; impaired by VPS33B. Interacts with RAB11A.

The protein resides in the cytoplasm. It localises to the cytoplasmic vesicle. Its subcellular location is the early endosome. It is found in the recycling endosome. The protein localises to the late endosome. Functionally, proposed to be involved in endosomal maturation implicating in part VPS33B. In epithelial cells, the VPS33B:VIPAS39 complex may play a role in the apical RAB11A-dependent recycling pathway and in the maintenance of the apical-basolateral polarity. May play a role in lysosomal trafficking, probably via association with the core HOPS complex in a discrete population of endosomes; the functions seems to be independent of VPS33B. May play a role in vesicular trafficking during spermatogenesis. May be involved in direct or indirect transcriptional regulation of E-cadherin. The sequence is that of Spermatogenesis-defective protein 39 homolog (Vipas39) from Mus musculus (Mouse).